The chain runs to 503 residues: MDFSIKGCDWSKGEAKGFLTGKSDCIVLGIFEAQTLSGAALDIDTATKGLISRVVKAGDMDGKRGKTLFLHEVSGIGASRVLLVGLGKQDAFNQKAYTDAVTAAWRALLSTKIVQVTFTLAQLPVDERSSDWGVRAAILALRNETYRFTQMKSKPEPASHTLKRVVFSVDPVDEKAAKLAVKQAVALANGMDLTRDLGNLPGNVCTPTYLGNTAKKIAKDWGLKAEVLGLKQIQALNMGSFLSVARASVEPPQFIVLHYQGAAAKAAPVVLVGKGITFDTGGISLKPGEAMDEMKYDMCGAGSVLGTMRAVAEMGLKINVVAIVPTCENMPGGNATKPGDIVTSMKGLTIEVLNTDAEGRLILCDALTYAERFKPAAVIDVATLTGACVIALGTHNSGLFSKDDALAGELLDASREANDPAWRMPLDDEYQDQLKSNFADIANIGGRPAGAVTAACFLSRFTDSYPWAHLDIAGTAWKGGAAKGATGRPVPLLAQFLIDRAGQ.

Positions 274 and 279 each coordinate Mn(2+). Residue Lys-286 is part of the active site. Mn(2+) is bound by residues Asp-297, Asp-356, and Glu-358. Arg-360 is an active-site residue.

Belongs to the peptidase M17 family. It depends on Mn(2+) as a cofactor.

It localises to the cytoplasm. The enzyme catalyses Release of an N-terminal amino acid, Xaa-|-Yaa-, in which Xaa is preferably Leu, but may be other amino acids including Pro although not Arg or Lys, and Yaa may be Pro. Amino acid amides and methyl esters are also readily hydrolyzed, but rates on arylamides are exceedingly low.. It catalyses the reaction Release of an N-terminal amino acid, preferentially leucine, but not glutamic or aspartic acids.. Functionally, presumably involved in the processing and regular turnover of intracellular proteins. Catalyzes the removal of unsubstituted N-terminal amino acids from various peptides. This chain is Probable cytosol aminopeptidase, found in Burkholderia ambifaria (strain ATCC BAA-244 / DSM 16087 / CCUG 44356 / LMG 19182 / AMMD) (Burkholderia cepacia (strain AMMD)).